Consider the following 311-residue polypeptide: MTKIIFMGTPDFSTTVLEMLIAEHDVIAVVTQPDRPVGRKRVMTPPPVKKVAMKYDLPVYQPEKLSGSEELEQLLQLDVDLIVTAAFGQLLPESLLALPKLGAINVHASLLPKYRGGAPIHQAIIDGEQETGITIMYMVKKLDAGNIISQQAIKIEENDNVGTMHDKLSVLGADLLKETLPSIIEGTNESVPQDDTQATFASNIRREDERINWNKPGRQVFNQIRGLSPWPVAYTTMDDTNLKIYDAELVETNKINEPGTIIETTKKAIIVATNDNEAVAIKDMQLAGKKRMLAANYLSGAQNTLVGKKLI.

109 to 112 lines the (6S)-5,6,7,8-tetrahydrofolate pocket; sequence SLLP.

Belongs to the Fmt family.

It carries out the reaction L-methionyl-tRNA(fMet) + (6R)-10-formyltetrahydrofolate = N-formyl-L-methionyl-tRNA(fMet) + (6S)-5,6,7,8-tetrahydrofolate + H(+). Attaches a formyl group to the free amino group of methionyl-tRNA(fMet). The formyl group appears to play a dual role in the initiator identity of N-formylmethionyl-tRNA by promoting its recognition by IF2 and preventing the misappropriation of this tRNA by the elongation apparatus. This is Methionyl-tRNA formyltransferase from Staphylococcus aureus (strain MW2).